The primary structure comprises 396 residues: 1-deoxy-D-xylulose 5-phosphate reductoisomerase (396 aa).

NADPH-binding residues include Thr13, Gly14, Ser15, Ile16, and Asn127. Position 128 (Lys128) interacts with 1-deoxy-D-xylulose 5-phosphate. NADPH is bound at residue Glu129. Asp153 is a binding site for Mn(2+). Residues Ser154, Glu155, Ser184, and His207 each coordinate 1-deoxy-D-xylulose 5-phosphate. Residue Glu155 participates in Mn(2+) binding. Gly213 serves as a coordination point for NADPH. Residues Ser220, Asn225, Lys226, and Glu229 each coordinate 1-deoxy-D-xylulose 5-phosphate. A Mn(2+)-binding site is contributed by Glu229.

The protein belongs to the DXR family. It depends on Mg(2+) as a cofactor. Mn(2+) serves as cofactor.

The catalysed reaction is 2-C-methyl-D-erythritol 4-phosphate + NADP(+) = 1-deoxy-D-xylulose 5-phosphate + NADPH + H(+). It functions in the pathway isoprenoid biosynthesis; isopentenyl diphosphate biosynthesis via DXP pathway; isopentenyl diphosphate from 1-deoxy-D-xylulose 5-phosphate: step 1/6. Functionally, catalyzes the NADPH-dependent rearrangement and reduction of 1-deoxy-D-xylulose-5-phosphate (DXP) to 2-C-methyl-D-erythritol 4-phosphate (MEP). The polypeptide is 1-deoxy-D-xylulose 5-phosphate reductoisomerase (Pseudomonas syringae pv. syringae (strain B728a)).